The sequence spans 406 residues: MAENGQNCDQRRVAMNKEQYNGNFTDPSSVNEKKRRDREERQNIVLWRQPLITLQYFSLETLVILKEWTSKLWHRQSIVVSFLLLLAVLTATYYVEGAHQQYVQRIEKQFLLYAYWIGLGILSSVGLGTGLHTFLLYLGPHIASVTLAAYECNSVNFPEPPYPDQIICPDEEGTEGTISLWSIISKVRIEACMWGIGTAIGELPPYFMARAARLSGAEPDDEEYQEFEEMLEHAETAQDFASRAKLAVQNLVQKVGFFGILACASIPNPLFDLAGITCGHFLVPFWTFFGATLIGKAIIKMHIQKLFVIVAFSKHIVEQMVAFIGAVPGIGPSLQKPFQEYLEAQRQKLHHRSEMGTPQGENWLSWMFEKLVVVMVCYFILSIINSMAQSYAKRIQQRLDPKEKTK.

A2 carries the N-acetylalanine modification. Residues 2–43 (AENGQNCDQRRVAMNKEQYNGNFTDPSSVNEKKRRDREERQN) lie on the Cytoplasmic side of the membrane. The helical transmembrane segment at 44–63 (IVLWRQPLITLQYFSLETLV) threads the bilayer. Topologically, residues 64-77 (ILKEWTSKLWHRQS) are extracellular. The helical transmembrane segment at 78 to 98 (IVVSFLLLLAVLTATYYVEGA) threads the bilayer. At 99-109 (HQQYVQRIEKQ) the chain is on the cytoplasmic side. Residues 110-130 (FLLYAYWIGLGILSSVGLGTG) form a helical membrane-spanning segment. At 131–250 (LHTFLLYLGP…ASRAKLAVQN (120 aa)) the chain is on the extracellular side. Residues 173–316 (GTEGTISLWS…FVIVAFSKHI (144 aa)) form a VTT domain region. The chain crosses the membrane as a helical span at residues 251–271 (LVQKVGFFGILACASIPNPLF). Residues 272 to 273 (DL) are Cytoplasmic-facing. The helical transmembrane segment at 274–294 (AGITCGHFLVPFWTFFGATLI) threads the bilayer. Residues 295–306 (GKAIIKMHIQKL) lie on the Extracellular side of the membrane. Residues 307 to 327 (FVIVAFSKHIVEQMVAFIGAV) traverse the membrane as a helical segment. Over 328 to 363 (PGIGPSLQKPFQEYLEAQRQKLHHRSEMGTPQGENW) the chain is Cytoplasmic. The helical transmembrane segment at 364 to 384 (LSWMFEKLVVVMVCYFILSII) threads the bilayer. Over 385-406 (NSMAQSYAKRIQQRLDPKEKTK) the chain is Extracellular.

This sequence belongs to the VMP1 family. In terms of assembly, interacts with BECN1. Interacts with TJP1. Interacts with TP53INP2. Interacts with TMEM41B. Interacts with ATP2A2, PLN and SLN; competes with PLN and SLN to prevent them from forming an inhibitory complex with ATP2A2. Interacts with ATG2A.

The protein localises to the endoplasmic reticulum-Golgi intermediate compartment membrane. The protein resides in the cell membrane. Its subcellular location is the vacuole membrane. It localises to the endoplasmic reticulum membrane. The catalysed reaction is a 1,2-diacyl-sn-glycero-3-phospho-L-serine(in) = a 1,2-diacyl-sn-glycero-3-phospho-L-serine(out). It carries out the reaction cholesterol(in) = cholesterol(out). The enzyme catalyses a 1,2-diacyl-sn-glycero-3-phosphocholine(in) = a 1,2-diacyl-sn-glycero-3-phosphocholine(out). It catalyses the reaction a 1,2-diacyl-sn-glycero-3-phosphoethanolamine(in) = a 1,2-diacyl-sn-glycero-3-phosphoethanolamine(out). Functionally, phospholipid scramblase involved in lipid homeostasis and membrane dynamics processes. Has phospholipid scramblase activity toward cholesterol and phosphatidylserine, as well as phosphatidylethanolamine and phosphatidylcholine. Required for autophagosome formation: participates in early stages of autophagosome biogenesis at the endoplasmic reticulum (ER) membrane by reequilibrating the leaflets of the ER as lipids are extracted by ATG2 (ATG2A or ATG2B) to mediate autophagosome assembly. Regulates ATP2A2 activity to control ER-isolation membrane contacts for autophagosome formation. In addition to autophagy, involved in other processes in which phospholipid scramblase activity is required. Modulates ER contacts with lipid droplets, mitochondria and endosomes. Plays an essential role in formation of cell junctions. Upon stress such as bacterial and viral infection, promotes formation of cytoplasmic vacuoles followed by cell death. Involved in the cytoplasmic vacuolization of acinar cells during the early stage of acute pancreatitis. The chain is Vacuole membrane protein 1 from Bos taurus (Bovine).